The chain runs to 756 residues: Transient receptor potential cation channel subfamily V member 2 (756 aa).

A disordered region spans residues 1-45 (MTSASNPPAFRLETSDGDEEGSAEVNKGKNEPPPMESPFQGEDRN). The tract at residues 1–385 (MTSASNPPAF…LLQEKWDRLI (385 aa)) is required for interaction with SLC50A1. Topologically, residues 1–387 (MTSASNPPAF…QEKWDRLIPR (387 aa)) are cytoplasmic. Phosphoserine is present on residues Ser-15 and Ser-77. 6 ANK repeats span residues 68–110 (NRFD…TEGS), 111–157 (TGKT…DEFY), 158–203 (RGHS…TCFY), 204–239 (FGEL…ATDS), 240–288 (LGNT…ICNH), and 289–315 (QGLT…REFS). The helical transmembrane segment at 388-408 (FFFNFACYLVYMIIFTIVAYH) threads the bilayer. Residues 409–428 (QPSLEQPAIPSSKATFGDSM) lie on the Extracellular side of the membrane. Residues 429–449 (LLLGHILILLGGIYLLLGQLW) form a helical membrane-spanning segment. The Cytoplasmic segment spans residues 450-455 (YFWRRR). A helical transmembrane segment spans residues 456–476 (LFIWISFMDSYFEILFLVQAL). Residues 477 to 490 (LTVLSQVLRFVETE) are Extracellular-facing. The chain crosses the membrane as a helical span at residues 491–511 (WYLPLLVSSLVLGWLNLLYYT). At 512 to 532 (RGFQHTGIYSVMIQKVILRDL) the chain is on the cytoplasmic side. Residues 533-553 (LRFLLVYLVFLFGFAVALVSL) traverse the membrane as a helical segment. The tract at residues 559 to 583 (SPKAPEDSNTTVTEKPTLGQEEEPV) is disordered. Asn-567 carries N-linked (GlcNAc...) asparagine glycosylation. The segment at residues 568-604 (TTVTEKPTLGQEEEPVPYGGILDASLELFKFTIGMGE) is an intramembrane region (pore-forming). A helical membrane pass occupies residues 617–637 (VLLLLLAYVLLTYVLLLNMLI). Topologically, residues 638-756 (ALMSETVNSV…HLPLQVLQSH (119 aa)) are cytoplasmic. The disordered stretch occupies residues 719–756 (EDPSGAGITGYKKNPTSKPGKNSASEEDHLPLQVLQSH). The segment covering 732–741 (NPTSKPGKNS) has biased composition (polar residues). Phosphoserine occurs at positions 743 and 755.

This sequence belongs to the transient receptor (TC 1.A.4) family. TrpV subfamily. TRPV2 sub-subfamily. Homotetramer. Interacts with a cAMP-dependent protein kinase type II regulatory subunit (PRKAR2A or PRKAR2B) and ACBD3. Interacts with SLC50A1; the interaction probably occurs intracellularly and depends on TRPV2 N-glycosylation. Post-translationally, N-glycosylated. In terms of processing, phosphorylated by PKA. As to expression, abundantly expressed in spleen, placenta, skeleton muscle, lung and brain.

Its subcellular location is the cell membrane. It is found in the cytoplasm. The protein localises to the melanosome. It carries out the reaction Ca(2+)(in) = Ca(2+)(out). The catalysed reaction is Mg(2+)(in) = Mg(2+)(out). The enzyme catalyses Na(+)(in) = Na(+)(out). It catalyses the reaction K(+)(in) = K(+)(out). Calcium-permeable, non-selective cation channel with an outward rectification. Seems to be regulated, at least in part, by IGF1, PDGF and neuropeptide head activator. May transduce physical stimuli in mast cells. Activated by temperatures higher than 52 degrees Celsius; is not activated by vanilloids and acidic pH. The sequence is that of Transient receptor potential cation channel subfamily V member 2 (Trpv2) from Mus musculus (Mouse).